Consider the following 609-residue polypeptide: Proline--tRNA ligase (609 aa).

This sequence belongs to the class-II aminoacyl-tRNA synthetase family. ProS type 1 subfamily. Homodimer.

The protein localises to the cytoplasm. It carries out the reaction tRNA(Pro) + L-proline + ATP = L-prolyl-tRNA(Pro) + AMP + diphosphate. Its function is as follows. Catalyzes the attachment of proline to tRNA(Pro) in a two-step reaction: proline is first activated by ATP to form Pro-AMP and then transferred to the acceptor end of tRNA(Pro). As ProRS can inadvertently accommodate and process non-cognate amino acids such as alanine and cysteine, to avoid such errors it has two additional distinct editing activities against alanine. One activity is designated as 'pretransfer' editing and involves the tRNA(Pro)-independent hydrolysis of activated Ala-AMP. The other activity is designated 'posttransfer' editing and involves deacylation of mischarged Ala-tRNA(Pro). The misacylated Cys-tRNA(Pro) is not edited by ProRS. The sequence is that of Proline--tRNA ligase from Synechococcus sp. (strain JA-2-3B'a(2-13)) (Cyanobacteria bacterium Yellowstone B-Prime).